Consider the following 651-residue polypeptide: p-hydroxybenzoic acid efflux pump subunit AaeB (651 aa).

11 consecutive transmembrane segments (helical) span residues 11–31, 41–61, 67–87, 91–111, 119–139, 150–170, 368–388, 405–425, 429–449, 455–475, and 481–501; these read FAFK…HLQL, AAIV…SGAI, LRII…VLTI, VLTL…SSLV, FGLA…TPLL, EIVL…PRSI, LFWL…IAVV, FLVG…FIIP, QSML…GIEV, GSLG…PMIF, and LDSA…LLLI.

The protein belongs to the aromatic acid exporter ArAE (TC 2.A.85) family.

The protein localises to the cell inner membrane. Forms an efflux pump with AaeA. Could function as a metabolic relief valve, allowing to eliminate certain compounds when they accumulate to high levels in the cell. The sequence is that of p-hydroxybenzoic acid efflux pump subunit AaeB from Yersinia pseudotuberculosis serotype O:1b (strain IP 31758).